We begin with the raw amino-acid sequence, 469 residues long: Receptor-type adenylate cyclase (469 aa).

Over 1–59 the chain is Extracellular; it reads VDTAEKLSKNGCASNYGATQISVWSMARALNASIPPLTNPMTPSMTFRNSNAGRISGVA. A glycan (N-linked (GlcNAc...) asparagine) is linked at asparagine 31. Residues 60-80 form a helical membrane-spanning segment; sequence LVGVIIGGALALFLVVALGVV. Residues 81–469 are Cytoplasmic-facing; it reads PYFFLHNTRD…IDLENDSTTS (389 aa). The Guanylate cyclase domain occupies 103–257; that stretch reads TLIFTDIESS…RTSNMAARTE (155 aa). Aspartate 108 and aspartate 151 together coordinate Mg(2+).

This sequence belongs to the adenylyl cyclase class-3 family. Requires Mg(2+) as cofactor.

The protein localises to the cell membrane. The enzyme catalyses ATP = 3',5'-cyclic AMP + diphosphate. Functionally, could act as a receptor for an unknown ligand. This Trypanosoma equiperdum protein is Receptor-type adenylate cyclase (ESAG4C).